Reading from the N-terminus, the 151-residue chain is Ribosomal RNA large subunit methyltransferase H (151 aa).

S-adenosyl-L-methionine contacts are provided by residues Gly100 and 119–124; that span reads LSKMTF.

This sequence belongs to the RNA methyltransferase RlmH family. In terms of assembly, homodimer.

It localises to the cytoplasm. It carries out the reaction pseudouridine(1915) in 23S rRNA + S-adenosyl-L-methionine = N(3)-methylpseudouridine(1915) in 23S rRNA + S-adenosyl-L-homocysteine + H(+). Specifically methylates the pseudouridine at position 1915 (m3Psi1915) in 23S rRNA. In Thermotoga maritima (strain ATCC 43589 / DSM 3109 / JCM 10099 / NBRC 100826 / MSB8), this protein is Ribosomal RNA large subunit methyltransferase H.